Consider the following 637-residue polypeptide: Coiled-coil domain-containing protein 22 homolog (637 aa).

2 coiled-coil regions span residues 322-489 (ETEI…YKQA) and 608-637 (SDRVVQDLKNIKSENQSLIKQIKTLIETKN).

This sequence belongs to the CCDC22 family.

The sequence is that of Coiled-coil domain-containing protein 22 homolog from Dictyostelium discoideum (Social amoeba).